The following is a 299-amino-acid chain: Ribosomal RNA small subunit methyltransferase H 1 (299 aa).

Residues G31–H33, D50, F76, D97, and Q104 each bind S-adenosyl-L-methionine.

It belongs to the methyltransferase superfamily. RsmH family.

It is found in the cytoplasm. The enzyme catalyses cytidine(1402) in 16S rRNA + S-adenosyl-L-methionine = N(4)-methylcytidine(1402) in 16S rRNA + S-adenosyl-L-homocysteine + H(+). Specifically methylates the N4 position of cytidine in position 1402 (C1402) of 16S rRNA. The sequence is that of Ribosomal RNA small subunit methyltransferase H 1 from Acholeplasma laidlawii (strain PG-8A).